The chain runs to 317 residues: MAPFLVLFLAGVVSASRGDREPVYRDCVTVCDQNNCTGFRLRDFRAQQPLYMRLTGWTCLDDCRYKCMWYTVSLYLKEGHEVPQFHGKWPFSRFLFFQEPASALASFLNGVASLLMLFRYRSSVPSSCQMYRTCLAFSMVSVNAWFWSTIFHTRDTALTEKMDYFCASSVILHSIYLCCMRTFGLQYPSIANAFGAFLVLLFACHISYLTLGRFDYSYNMAANTSFGIVNLMWWLAWCMWRRFHQPYLWKCVLVVVLLQSLALLELLDFPPVMWILDAHALWHFSTIPLHFLFYSFLRDDSLYLLKVNHDDDIPKLD.

Residues 1–18 (MAPFLVLFLAGVVSASRG) form the signal peptide. At 19 to 93 (DREPVYRDCV…QFHGKWPFSR (75 aa)) the chain is on the lumenal side. A glycan (N-linked (GlcNAc...) asparagine) is linked at Asn35. The helical transmembrane segment at 94–114 (FLFFQEPASALASFLNGVASL) threads the bilayer. The Cytoplasmic segment spans residues 115-132 (LMLFRYRSSVPSSCQMYR). A helical transmembrane segment spans residues 133-153 (TCLAFSMVSVNAWFWSTIFHT). The Lumenal segment spans residues 154–163 (RDTALTEKMD). Residues 164–180 (YFCASSVILHSIYLCCM) form a helical membrane-spanning segment. At 181-189 (RTFGLQYPS) the chain is on the cytoplasmic side. Residues 190–210 (IANAFGAFLVLLFACHISYLT) traverse the membrane as a helical segment. The Lumenal segment spans residues 211-219 (LGRFDYSYN). Residues 220-240 (MAANTSFGIVNLMWWLAWCMW) form a helical membrane-spanning segment. The Cytoplasmic segment spans residues 241–251 (RRFHQPYLWKC). Residues 252 to 272 (VLVVVLLQSLALLELLDFPPV) form a helical membrane-spanning segment. Position 273 (Met273) is a topological domain, lumenal. A helical transmembrane segment spans residues 274 to 293 (WILDAHALWHFSTIPLHFLF). The Cytoplasmic segment spans residues 294–317 (YSFLRDDSLYLLKVNHDDDIPKLD).

Belongs to the PGAP3 family.

The protein localises to the golgi apparatus membrane. Involved in the fatty acid remodeling steps of GPI-anchor maturation where the unsaturated acyl chain at sn-2 of inositol phosphate is replaced by a saturated stearoyl chain. May catalyze the first step of the fatty acid remodeling, by removing the unsaturated acyl chain at sn-2 of inositol phosphate, generating a lyso-GPI intermediate. The fatty acid remodeling steps is critical for the integration of GPI-APs into lipid rafts. This chain is GPI-specific phospholipase A2-like PGAP3, found in Xenopus laevis (African clawed frog).